The following is a 953-amino-acid chain: Calcium-transporting ATPase type 2C member 1 (953 aa).

Over 1 to 104 (MDNLLPQSRF…NEFDISEDEP (104 aa)) the chain is Cytoplasmic. Residues 105–125 (LWKKYISQFKNPLIMLLLASA) form a helical membrane-spanning segment. At 126 to 138 (VISVLMHQFDDAV) the chain is on the lumenal side. The chain crosses the membrane as a helical span at residues 139–157 (SITVAILIVVTVAFVQEYR). At 158–296 (SEKSLEELSK…APKTPLQKSM (139 aa)) the chain is on the cytoplasmic side. Residues 297–316 (DLLGKQLSFYSFGIIGIIML) form a helical membrane-spanning segment. The Lumenal segment spans residues 317–328 (VGWLLGKDILEM). A helical transmembrane segment spans residues 329-346 (FTISVSLAVAAIPEGLPI). Val337, Ala338, Ile340, and Glu342 together coordinate Ca(2+). Residues 347-733 (VVTVTLALGV…EEGKGIYNNI (387 aa)) lie on the Cytoplasmic side of the membrane. Asp384 functions as the 4-aspartylphosphate intermediate in the catalytic mechanism. Asp678 and Asp682 together coordinate Mg(2+). Residues 734–753 (KNFVRFQLSTSIAALTLISL) form a helical membrane-spanning segment. The Lumenal segment spans residues 754-763 (ATLMNFPNPL). Residues 764–784 (NAMQILWINIIMDGPPAQSLG) traverse the membrane as a helical segment. Ca(2+) is bound by residues Asn772 and Asp776. Over 785-804 (VEPVDKDVIRKPPRNWKDSI) the chain is Cytoplasmic. The helical transmembrane segment at 805-824 (LTKNLILKILVSSIIIVCGT) threads the bilayer. Residues 825 to 842 (LFVFWRELRDNVITPRDT) are Lumenal-facing. A helical membrane pass occupies residues 843–862 (TMTFTCFVFFDMFNALSSRS). The Cytoplasmic segment spans residues 863-875 (QTKSVFEIGLCSN). A helical transmembrane segment spans residues 876–894 (KMFCYAVLGSIMGQLLVIY). Topologically, residues 895-909 (FPPLQKVFQTESLSI) are lumenal. A helical transmembrane segment spans residues 910 to 930 (LDLLFLLGLTSSVCIVAEIIK). The Cytoplasmic segment spans residues 931–953 (KVERSREKIQKPVSSTSSSFLEV).

It belongs to the cation transport ATPase (P-type) (TC 3.A.3) family. Type IIA subfamily. As to quaternary structure, monomer. Homodimer.

The protein localises to the golgi apparatus. The protein resides in the trans-Golgi network membrane. Its subcellular location is the golgi stack membrane. The catalysed reaction is Ca(2+)(in) + ATP + H2O = Ca(2+)(out) + ADP + phosphate + H(+). The enzyme catalyses Mn(2+)(in) + ATP + H2O = Mn(2+)(out) + ADP + phosphate + H(+). In terms of biological role, ATP-driven pump that supplies the Golgi apparatus with Ca(2+) and Mn(2+) ions, both essential cofactors for processing and trafficking of newly synthesized proteins in the secretory pathway. Within a catalytic cycle, acquires Ca(2+) or Mn(2+) ions on the cytoplasmic side of the membrane and delivers them to the lumenal side. The transfer of ions across the membrane is coupled to ATP hydrolysis and is associated with a transient phosphorylation that shifts the pump conformation from inward-facing to outward-facing state. Plays a primary role in the maintenance of Ca(2+) homeostasis in the trans-Golgi compartment with a functional impact on Golgi and post-Golgi protein sorting as well as a structural impact on cisternae morphology. Responsible for loading the Golgi stores with Ca(2+) ions in keratinocytes, contributing to keratinocyte differentiation and epidermis integrity. Participates in Ca(2+) and Mn(2+) ions uptake into the Golgi store of hippocampal neurons and regulates protein trafficking required for neural polarity. May also play a role in the maintenance of Ca(2+) and Mn(2+) homeostasis and signaling in the cytosol while preventing cytotoxicity. This Bos taurus (Bovine) protein is Calcium-transporting ATPase type 2C member 1 (ATP2C1).